The chain runs to 247 residues: Segregation and condensation protein A (247 aa).

This sequence belongs to the ScpA family. As to quaternary structure, component of a cohesin-like complex composed of ScpA, ScpB and the Smc homodimer, in which ScpA and ScpB bind to the head domain of Smc. The presence of the three proteins is required for the association of the complex with DNA.

It localises to the cytoplasm. Its function is as follows. Participates in chromosomal partition during cell division. May act via the formation of a condensin-like complex containing Smc and ScpB that pull DNA away from mid-cell into both cell halves. This chain is Segregation and condensation protein A, found in Bacillus cereus (strain AH187).